Here is a 464-residue protein sequence, read N- to C-terminus: ATP synthase subunit beta (464 aa).

Residue 150 to 157 coordinates ATP; the sequence is GGAGVGKT.

The protein belongs to the ATPase alpha/beta chains family. F-type ATPases have 2 components, CF(1) - the catalytic core - and CF(0) - the membrane proton channel. CF(1) has five subunits: alpha(3), beta(3), gamma(1), delta(1), epsilon(1). CF(0) has three main subunits: a(1), b(2) and c(9-12). The alpha and beta chains form an alternating ring which encloses part of the gamma chain. CF(1) is attached to CF(0) by a central stalk formed by the gamma and epsilon chains, while a peripheral stalk is formed by the delta and b chains.

It localises to the cell membrane. It catalyses the reaction ATP + H2O + 4 H(+)(in) = ADP + phosphate + 5 H(+)(out). Its function is as follows. Produces ATP from ADP in the presence of a proton gradient across the membrane. The catalytic sites are hosted primarily by the beta subunits. In Dehalococcoides mccartyi (strain ATCC BAA-2100 / JCM 16839 / KCTC 5957 / BAV1), this protein is ATP synthase subunit beta.